Reading from the N-terminus, the 172-residue chain is Adenine phosphoribosyltransferase (172 aa).

This sequence belongs to the purine/pyrimidine phosphoribosyltransferase family. Homodimer.

It is found in the cytoplasm. It catalyses the reaction AMP + diphosphate = 5-phospho-alpha-D-ribose 1-diphosphate + adenine. The protein operates within purine metabolism; AMP biosynthesis via salvage pathway; AMP from adenine: step 1/1. Catalyzes a salvage reaction resulting in the formation of AMP, that is energically less costly than de novo synthesis. The protein is Adenine phosphoribosyltransferase of Desulforamulus reducens (strain ATCC BAA-1160 / DSM 100696 / MI-1) (Desulfotomaculum reducens).